The following is a 344-amino-acid chain: Protein POLAR LOCALIZATION DURING ASYMMETRIC DIVISION AND REDISTRIBUTION (344 aa).

The residue at position 19 (Thr19) is a Phosphothreonine; by ASK7. A Phosphoserine; by ASK7 modification is found at Ser79. Thr84 and Thr86 each carry phosphothreonine; by ASK7. Ser91 and Ser94 each carry phosphoserine; by ASK7. Phosphothreonine; by ASK7 occurs at positions 193, 217, and 233. Ser235 is subject to Phosphoserine; by ASK7. A coiled-coil region spans residues 262–297; sequence LETRQQEELVKLETALNRVERRLQEKETEVSWWKDA. A phosphoserine; by ASK7 mark is found at Ser308, Ser309, Ser320, Ser321, and Ser336.

In terms of assembly, component of a complex made of POLAR, BASL, ASK7/BIN2 and ASK3/SK12. Interacts with BASL, ASK7/BIN2 and ASK3/SK12. In terms of processing, phosphorylation by ASK7/BIN2 is increases turnover. As to expression, expressed in stomatal lineage cells with asymmetric division potential.

Its subcellular location is the cytoplasm. The protein localises to the cell cortex. Regulates asymmetric cell division (ACD), especially in stomatal-lineage cells. Acts as a stomatal lineage scaffold which regulates subcellular localization and transient polarization of kinases (e.g. ASK7/BIN2 and ASK3/SK12) involved in ACD in a BASL-dependent manner. Promotes the differentiation of both pavement cells and stomata. The sequence is that of Protein POLAR LOCALIZATION DURING ASYMMETRIC DIVISION AND REDISTRIBUTION from Arabidopsis thaliana (Mouse-ear cress).